The primary structure comprises 122 residues: uncharacterized protein (122 aa).

Residues Met-1 to Ala-22 form the signal peptide.

This is an uncharacterized protein from Escherichia coli (strain K12).